The chain runs to 278 residues: 4-deoxy-L-threo-5-hexosulose-uronate ketol-isomerase (278 aa).

Residues His196, His198, Glu203, and His245 each coordinate Zn(2+).

The protein belongs to the KduI family. The cofactor is Zn(2+).

It carries out the reaction 5-dehydro-4-deoxy-D-glucuronate = 3-deoxy-D-glycero-2,5-hexodiulosonate. It functions in the pathway glycan metabolism; pectin degradation; 2-dehydro-3-deoxy-D-gluconate from pectin: step 4/5. Functionally, catalyzes the isomerization of 5-dehydro-4-deoxy-D-glucuronate to 3-deoxy-D-glycero-2,5-hexodiulosonate. The chain is 4-deoxy-L-threo-5-hexosulose-uronate ketol-isomerase from Shigella flexneri serotype 5b (strain 8401).